The chain runs to 436 residues: Serine--tRNA ligase (436 aa).

Residue 239-241 (TAE) participates in L-serine binding. 270-272 (RKE) is an ATP binding site. Glutamate 293 lines the L-serine pocket. Residue 357 to 360 (EISS) participates in ATP binding. Serine 392 contributes to the L-serine binding site.

Belongs to the class-II aminoacyl-tRNA synthetase family. Type-1 seryl-tRNA synthetase subfamily. As to quaternary structure, homodimer. The tRNA molecule binds across the dimer.

It is found in the cytoplasm. The enzyme catalyses tRNA(Ser) + L-serine + ATP = L-seryl-tRNA(Ser) + AMP + diphosphate + H(+). It catalyses the reaction tRNA(Sec) + L-serine + ATP = L-seryl-tRNA(Sec) + AMP + diphosphate + H(+). Its pathway is aminoacyl-tRNA biosynthesis; selenocysteinyl-tRNA(Sec) biosynthesis; L-seryl-tRNA(Sec) from L-serine and tRNA(Sec): step 1/1. Its function is as follows. Catalyzes the attachment of serine to tRNA(Ser). Is also able to aminoacylate tRNA(Sec) with serine, to form the misacylated tRNA L-seryl-tRNA(Sec), which will be further converted into selenocysteinyl-tRNA(Sec). This Leuconostoc citreum (strain KM20) protein is Serine--tRNA ligase.